The following is a 376-amino-acid chain: Queuine tRNA-ribosyltransferase (376 aa).

The Proton acceptor role is filled by D93. Residues 93–97 (DSGGF), D147, Q190, and G217 contribute to the substrate site. An RNA binding region spans residues 248–254 (GVGKPDD). D267 serves as the catalytic Nucleophile. Zn(2+) is bound by residues C305, C307, C310, and H336.

It belongs to the queuine tRNA-ribosyltransferase family. Homodimer. Within each dimer, one monomer is responsible for RNA recognition and catalysis, while the other monomer binds to the replacement base PreQ1. It depends on Zn(2+) as a cofactor.

It carries out the reaction 7-aminomethyl-7-carbaguanine + guanosine(34) in tRNA = 7-aminomethyl-7-carbaguanosine(34) in tRNA + guanine. It functions in the pathway tRNA modification; tRNA-queuosine biosynthesis. In terms of biological role, catalyzes the base-exchange of a guanine (G) residue with the queuine precursor 7-aminomethyl-7-deazaguanine (PreQ1) at position 34 (anticodon wobble position) in tRNAs with GU(N) anticodons (tRNA-Asp, -Asn, -His and -Tyr). Catalysis occurs through a double-displacement mechanism. The nucleophile active site attacks the C1' of nucleotide 34 to detach the guanine base from the RNA, forming a covalent enzyme-RNA intermediate. The proton acceptor active site deprotonates the incoming PreQ1, allowing a nucleophilic attack on the C1' of the ribose to form the product. After dissociation, two additional enzymatic reactions on the tRNA convert PreQ1 to queuine (Q), resulting in the hypermodified nucleoside queuosine (7-(((4,5-cis-dihydroxy-2-cyclopenten-1-yl)amino)methyl)-7-deazaguanosine). The sequence is that of Queuine tRNA-ribosyltransferase from Cereibacter sphaeroides (strain ATCC 17029 / ATH 2.4.9) (Rhodobacter sphaeroides).